The chain runs to 399 residues: Fluconazole resistance protein 3 (399 aa).

2 disordered regions span residues 1–21 (MNFKTENSTTPNGDWSQSKAF) and 103–197 (HPYI…EKDA). Residues 103–145 (HPYITNTNNHLSYSNSSEEFSPIGNNMSPDSTGGANSNNFTSG) are compositionally biased toward polar residues. The span at 167–184 (SGNNNNNNGTSRSSQSSS) shows a compositional bias: low complexity. Positions 210–273 (EELQMKRKAQ…ISIATENEIL (64 aa)) constitute a bZIP domain. The interval 215–234 (KRKAQNRAAQRAFRERKESK) is basic motif. The segment at 235–242 (LKELEAKL) is leucine-zipper.

The protein belongs to the bZIP family.

The protein resides in the nucleus. Its function is as follows. Transcription factor that confers fluconazole resistance in S.cerevisiae by activation of the PDR5 gene. Can also activate the transcription of S.cerevisiae genes involved in 4-nitroquinoline-N-oxide resistance. In Candida albicans (Yeast), this protein is Fluconazole resistance protein 3 (FCR3).